We begin with the raw amino-acid sequence, 179 residues long: Putative manganese efflux pump MntP (179 aa).

The next 6 helical transmembrane spans lie at 4–24 (VLIL…GLGI), 39–59 (LFFG…GIGL), 69–89 (IVAF…AFNE), 102–122 (ILLT…YSLH), 128–148 (IYLS…IGVY), and 159–179 (SKAE…ILLF).

It belongs to the MntP (TC 9.B.29) family.

The protein resides in the cell inner membrane. Its function is as follows. Probably functions as a manganese efflux pump. This chain is Putative manganese efflux pump MntP, found in Aliarcobacter butzleri (strain RM4018) (Arcobacter butzleri).